A 210-amino-acid chain; its full sequence is dTTP/UTP pyrophosphatase (210 aa).

Asp80 serves as the catalytic Proton acceptor.

The protein belongs to the Maf family. YhdE subfamily. The cofactor is a divalent metal cation.

The protein localises to the cytoplasm. The enzyme catalyses dTTP + H2O = dTMP + diphosphate + H(+). The catalysed reaction is UTP + H2O = UMP + diphosphate + H(+). In terms of biological role, nucleoside triphosphate pyrophosphatase that hydrolyzes dTTP and UTP. May have a dual role in cell division arrest and in preventing the incorporation of modified nucleotides into cellular nucleic acids. This chain is dTTP/UTP pyrophosphatase, found in Nitratidesulfovibrio vulgaris (strain ATCC 29579 / DSM 644 / CCUG 34227 / NCIMB 8303 / VKM B-1760 / Hildenborough) (Desulfovibrio vulgaris).